Here is a 209-residue protein sequence, read N- to C-terminus: FMN-dependent NADH:quinone oxidoreductase (209 aa).

Residues serine 9 and 15–17 (SNS) contribute to the FMN site.

This sequence belongs to the azoreductase type 1 family. In terms of assembly, homodimer. Requires FMN as cofactor.

It catalyses the reaction 2 a quinone + NADH + H(+) = 2 a 1,4-benzosemiquinone + NAD(+). It carries out the reaction N,N-dimethyl-1,4-phenylenediamine + anthranilate + 2 NAD(+) = 2-(4-dimethylaminophenyl)diazenylbenzoate + 2 NADH + 2 H(+). Quinone reductase that provides resistance to thiol-specific stress caused by electrophilic quinones. Its function is as follows. Also exhibits azoreductase activity. Catalyzes the reductive cleavage of the azo bond in aromatic azo compounds to the corresponding amines. The protein is FMN-dependent NADH:quinone oxidoreductase of Bordetella parapertussis (strain 12822 / ATCC BAA-587 / NCTC 13253).